Reading from the N-terminus, the 345-residue chain is Skn-1 dependent zygotic transcript 15 protein (345 aa).

The F-box domain maps to Ala11–Val55.

May have a role in embryogenesis. This is Skn-1 dependent zygotic transcript 15 protein (sdz-15) from Caenorhabditis elegans.